A 420-amino-acid chain; its full sequence is uncharacterized protein (420 aa).

This is an uncharacterized protein from Pseudanabaena tenuis (strain PCC 7409).